The chain runs to 202 residues: Pycsar effector protein PtPycTM (202 aa).

Helical transmembrane passes span 60–80, 85–105, and 181–201; these read GVVL…AADI, LVIL…AVLA, and ILVG…VALG.

The protein resides in the cell membrane. Pycsar (pyrimidine cyclase system for antiphage resistance) provides immunity against bacteriophage. The pyrimidine cyclase (PycC) synthesizes cyclic nucleotides in response to infection; these serve as specific second messenger signals. The signals activate the adjacent effector, leading to bacterial cell death and abortive phage infection. A clade D Pycsar system. Functionally, the effector gene of a two-gene Pycsar system. Expression of this and adjacent uridylate cyclase PtPycC (AC A0A4V2JTK3) probably confers resistance to bacteriophage. The genes are probably only expressed in response to bacteriophage infection. Probably only responds to cUMP (produced by its cognate NTP cyclase), acts by impairing membrane integrity. This Propioniciclava tarda protein is Pycsar effector protein PtPycTM.